A 275-amino-acid polypeptide reads, in one-letter code: Probable endonuclease lcl3 (275 aa).

Positions 1–25 (MRWPPWASNTQASNNDHPTTTNNND) are disordered. Over residues 14-25 (NNDHPTTTNNND) the composition is skewed to low complexity. A helical membrane pass occupies residues 41 to 57 (LIPTLVLTTGILSAFTL). The region spanning 79–247 (RSILGKVTSV…KARGLGLWKG (169 aa)) is the TNase-like domain. Arg-130 is an active-site residue. Position 135 (Asp-135) interacts with Ca(2+). Residues Glu-138 and Arg-178 contribute to the active site.

Belongs to the LCL3 family.

The protein localises to the mitochondrion. The protein resides in the membrane. This is Probable endonuclease lcl3 (lcl3) from Aspergillus niger (strain ATCC MYA-4892 / CBS 513.88 / FGSC A1513).